A 278-amino-acid polypeptide reads, in one-letter code: Large ribosomal subunit protein uL2c (278 aa).

A disordered region spans residues 224-267; sequence VVMNPVDHPHGGGEGRAPIGRKKPLTPWGHTALGGRSRKNHKYS.

The protein belongs to the universal ribosomal protein uL2 family. As to quaternary structure, part of the 50S ribosomal subunit.

It localises to the plastid. Its subcellular location is the chloroplast. The chain is Large ribosomal subunit protein uL2c (rpl2) from Huperzia lucidula (Shining clubmoss).